Reading from the N-terminus, the 292-residue chain is Ribosomal protein L11 methyltransferase (292 aa).

Thr136, Gly159, Asp181, and Asn228 together coordinate S-adenosyl-L-methionine.

This sequence belongs to the methyltransferase superfamily. PrmA family.

The protein localises to the cytoplasm. The catalysed reaction is L-lysyl-[protein] + 3 S-adenosyl-L-methionine = N(6),N(6),N(6)-trimethyl-L-lysyl-[protein] + 3 S-adenosyl-L-homocysteine + 3 H(+). Functionally, methylates ribosomal protein L11. The polypeptide is Ribosomal protein L11 methyltransferase (Agrobacterium fabrum (strain C58 / ATCC 33970) (Agrobacterium tumefaciens (strain C58))).